Here is a 153-residue protein sequence, read N- to C-terminus: Bud site selection protein 25 (153 aa).

Involved in bud site selection. Required for resistance to the DNA-damaging agent methyl methanesulfonate (MMS). This chain is Bud site selection protein 25, found in Saccharomyces cerevisiae (strain ATCC 204508 / S288c) (Baker's yeast).